Reading from the N-terminus, the 227-residue chain is Isopentenyl-diphosphate Delta-isomerase 1 (227 aa).

Lys-36 is a binding site for substrate. Residues His-40 and His-51 each contribute to the Mg(2+) site. The Nudix hydrolase domain maps to Leu-49–Ile-199. Residues Arg-70 and Lys-74 each coordinate substrate. Cys-86 serves as the catalytic Proton acceptor. Ser-87 serves as a coordination point for substrate. Positions 146 and 148 each coordinate Mg(2+). The active site involves Glu-148. Lys-176 is modified (N6-acetyllysine).

It belongs to the IPP isomerase type 1 family. As to quaternary structure, monomer. The cofactor is Mg(2+).

The protein localises to the peroxisome. The enzyme catalyses isopentenyl diphosphate = dimethylallyl diphosphate. It participates in isoprenoid biosynthesis; dimethylallyl diphosphate biosynthesis; dimethylallyl diphosphate from isopentenyl diphosphate: step 1/1. Functionally, catalyzes the 1,3-allylic rearrangement of the homoallylic substrate isopentenyl (IPP) to its highly electrophilic allylic isomer, dimethylallyl diphosphate (DMAPP). The sequence is that of Isopentenyl-diphosphate Delta-isomerase 1 (IDI1) from Bos taurus (Bovine).